The chain runs to 540 residues: Cytochrome P450 monooxygenase ORF5 (540 aa).

The chain crosses the membrane as a helical span at residues tyrosine 48–alanine 68. 2 N-linked (GlcNAc...) asparagine glycosylation sites follow: asparagine 376 and asparagine 460. Heme is bound at residue cysteine 483.

This sequence belongs to the cytochrome P450 family. Heme is required as a cofactor.

Its subcellular location is the membrane. Its pathway is sesquiterpene biosynthesis. Cytochrome P450 monooxygenase; part of the gene cluster that mediates the biosynthesis of PR-toxin, a bicyclic sesquiterpene belonging to the eremophilane class and acting as a mycotoxin. The first step of the pathway is catalyzed by the aristolochene synthase which performs the cyclization of trans,trans-farnesyl diphosphate (FPP) to the bicyclic sesquiterpene aristolochene. Following the formation of aristolochene, the non-oxygenated aristolochene is converted to the trioxygenated intermediate eremofortin B, via 7-epi-neopetasone. This conversion appears to involve three enzymes, a hydroxysterol oxidase-like enzyme, the quinone-oxidase prx3 that forms the quinone-type-structure in the bicyclic nucleus of aristolochene with the C8-oxo group and the C-3 hydroxyl group, and the P450 monooxygenase ORF6 that introduces the epoxide at the double bond between carbons 1 and 2. No monoxy or dioxy-intermediates have been reported to be released to the broth, so these three early oxidative reactions may be coupled together. Eremofortin B is further oxidized by another P450 monooxygenase, that introduces a second epoxide between carbons 7 and 11 prior to acetylation to eremofortin A by the acetyltransferase ORF8. The second epoxidation may be performed by a second P450 monooxygenase. After the acetylation step, eremofortin A is converted to eremofortin C and then to PR-toxin. First the conversion of eremofortin A to eremofortin C proceeds by oxidation of the side chain of the molecule at C-12 and is catalyzed by the short-chain oxidoreductase prx1. The cytochrome P450 monooxygenase ORF6 is probably also involved in this step. The primary alcohol formed at C-12 is finally oxidized by the short-chain alcohol dehydrogenase prx4 that forms PR-toxin. The sequence is that of Cytochrome P450 monooxygenase ORF5 from Penicillium roqueforti (strain FM164).